Consider the following 128-residue polypeptide: Probable heavy metal-dependent transcriptional regulator HI_0293 (128 aa).

The 69-residue stretch at 1–69 (MNISEAAKLV…LHQIAQLLAL (69 aa)) folds into the HTH merR-type domain. The H-T-H motif DNA-binding region spans 4 to 23 (SEAAKLVGLSTKQIRDYEKM).

It localises to the cytoplasm. Its function is as follows. Could be a copper-dependent transcriptional activator of the ATPase HI_0290. The polypeptide is Probable heavy metal-dependent transcriptional regulator HI_0293 (Haemophilus influenzae (strain ATCC 51907 / DSM 11121 / KW20 / Rd)).